A 375-amino-acid polypeptide reads, in one-letter code: CMP-N-acetylneuraminate-beta-1,4-galactoside alpha-2,3-sialyltransferase (375 aa).

The Cytoplasmic portion of the chain corresponds to 1 to 8; that stretch reads MGLLVFVR. Residues 9–28 traverse the membrane as a helical; Signal-anchor for type II membrane protein segment; that stretch reads NLLLALCLFLVLGFLYYSAW. The Lumenal portion of the chain corresponds to 29 to 375; sequence KLHLLQWEED…RVITDLSSGI (347 aa). N80 and N171 each carry an N-linked (GlcNAc...) asparagine glycan. The cysteines at positions 160 and 314 are disulfide-linked.

This sequence belongs to the glycosyltransferase 29 family. The soluble form derives from the membrane form by proteolytic processing. In terms of tissue distribution, highly expressed in adult skeletal muscle and in all fetal tissues examined and to a much lesser extent in placenta, lung and liver.

It localises to the golgi apparatus. The protein resides in the golgi stack membrane. The protein localises to the secreted. It carries out the reaction a beta-D-galactosyl-(1-&gt;4)-N-acetyl-beta-D-glucosaminyl derivative + CMP-N-acetyl-beta-neuraminate = an N-acetyl-alpha-neuraminyl-(2-&gt;3)-beta-D-galactosyl-(1-&gt;4)-N-acetyl-beta-D-glucosaminyl derivative + CMP + H(+). Its pathway is protein modification; protein glycosylation. In terms of biological role, catalyzes the formation of the NeuAc-alpha-2,3-Gal-beta-1,4-GlcNAc-, NeuAc-alpha-2,3-Gal-beta-1,3-GlcNAc- and NeuAc-alpha-2,3-Gal-beta-1,3-GalNAc- sequences found in terminal carbohydrate groups of glycoproteins and glycolipids. The highest activity is toward Gal-beta-1,3-GlcNAc and the lowest toward Gal-beta-1,3-GalNAc. This Homo sapiens (Human) protein is CMP-N-acetylneuraminate-beta-1,4-galactoside alpha-2,3-sialyltransferase (ST3GAL3).